The following is a 238-amino-acid chain: MKYIIANFKMNATQELINHFLNNLTLFDEQKIIIGLAPGDLYLKTFVNLAEIKKVNLYAQNPSLHNKGPYTGQISCLQLLDINIKNALVGHSEIRIDFSQSIIDQKIKISMDLLEQVIICVGETFDAYKQNKSLNFVLNQLANIINYKGLKKIIIAYEPIWAIGTDLELDFKHINYMIEGIKTYLYNCTGINIPILYGGSVNDNNINELCNQKLIDGFLIGNASLDVNVFNKIIDKCK.

A substrate-binding site is contributed by 7-9; that stretch reads NFK. His-91 (electrophile) is an active-site residue. Glu-158 (proton acceptor) is an active-site residue. Positions 164 and 200 each coordinate substrate.

Belongs to the triosephosphate isomerase family. Homodimer.

It localises to the cytoplasm. The enzyme catalyses D-glyceraldehyde 3-phosphate = dihydroxyacetone phosphate. The protein operates within carbohydrate biosynthesis; gluconeogenesis. Its pathway is carbohydrate degradation; glycolysis; D-glyceraldehyde 3-phosphate from glycerone phosphate: step 1/1. Its function is as follows. Involved in the gluconeogenesis. Catalyzes stereospecifically the conversion of dihydroxyacetone phosphate (DHAP) to D-glyceraldehyde-3-phosphate (G3P). In Ureaplasma parvum serovar 3 (strain ATCC 27815 / 27 / NCTC 11736), this protein is Triosephosphate isomerase.